The sequence spans 339 residues: Glycerol-3-phosphate dehydrogenase [NAD(P)+] (339 aa).

4 residues coordinate NADPH: Ser14, Tyr15, His35, and Lys109. Positions 109, 138, and 140 each coordinate sn-glycerol 3-phosphate. Ala142 is a binding site for NADPH. Sn-glycerol 3-phosphate-binding residues include Lys194, Asp247, Ser257, Arg258, and Asn259. Catalysis depends on Lys194, which acts as the Proton acceptor. Arg258 provides a ligand contact to NADPH. Positions 282 and 284 each coordinate NADPH.

The protein belongs to the NAD-dependent glycerol-3-phosphate dehydrogenase family.

It is found in the cytoplasm. The enzyme catalyses sn-glycerol 3-phosphate + NAD(+) = dihydroxyacetone phosphate + NADH + H(+). It carries out the reaction sn-glycerol 3-phosphate + NADP(+) = dihydroxyacetone phosphate + NADPH + H(+). It participates in membrane lipid metabolism; glycerophospholipid metabolism. In terms of biological role, catalyzes the reduction of the glycolytic intermediate dihydroxyacetone phosphate (DHAP) to sn-glycerol 3-phosphate (G3P), the key precursor for phospholipid synthesis. This is Glycerol-3-phosphate dehydrogenase [NAD(P)+] from Shewanella amazonensis (strain ATCC BAA-1098 / SB2B).